Reading from the N-terminus, the 240-residue chain is tRNA pseudouridine synthase B (240 aa).

Asp54 functions as the Nucleophile in the catalytic mechanism.

The protein belongs to the pseudouridine synthase TruB family. Type 1 subfamily.

It catalyses the reaction uridine(55) in tRNA = pseudouridine(55) in tRNA. Responsible for synthesis of pseudouridine from uracil-55 in the psi GC loop of transfer RNAs. The chain is tRNA pseudouridine synthase B from Chlorobaculum tepidum (strain ATCC 49652 / DSM 12025 / NBRC 103806 / TLS) (Chlorobium tepidum).